The chain runs to 975 residues: MKLEHPDRLMNRTPLSLAALETHDAFAERHIGPDAASQQAMLDTLGFASRAALIDAVIPASIRRAETLPLGPFAQPKSEAEALAALRALADKNQVFRSYIGQGYHDTHTPAVILRNVLENPAWYTAYTPYQPEISQGRLEALLNFQQMVADLTGLAISNASLLDEATAAAEAMTLLQRTGKPKSNVFYVADDVLPQTLEVIRTRALPIGIEVKTGPAADAAQANAFGVLLQYPGVNGDVRDYRALTDAIHAAGGHVVVAADLLALTVLTPPGEWGADVAIGNTQRFGVPMGFGGPHAAYLAVRDEFKRQMPGRLVGVTVDAQGKPALRLALQTREQHIRREKATSNVCTAQALLAIMASMYAVYHGPHGLKTIALRVNRIAALLAAGVKQLGFATVNDTFFDTLTIDTGARTAQVHEFAKAKRINLRRVSDTQVGVSVDETTTRDDLADLLDVFAQAAGGTAPAVDALDAGLAGVAALPAGLERTSAYLTHHVFNRHHSETEMLRYLRSLSDKDLALDRSMIPLGSCTMKLNATSEMLPVTWPEFGGIHPFAPAEQTVGYREMIDQLEQMLVAATGYAAVSLQPNAGSQGEYAGLLIIHAYHASRGEGHRDVCLIPASAHGTNPASAHMAGMKVVVVACDAQGNVDIADLKAKAEQHSANLAAIMITYPSTHGVFEQNVREICEIVHAHGGQVYVDGANMNAMVGLTAPGQFGGDVSHLNLHKTFCIPHGGGGPGVGPVAVGAHLAKFLPNQRSTGYARAEDGIGAVSAAPYGSASILPISWMYIAMMGAKNLTAATETAILNANYIAKRLAPHYPVLYSGPGGLVAHECILDLRPIKESSGISVDDVAKRLMDYGFHAPTMSFPVPGTLMVEPTESESQEELDRFIAAMIAIREEIRAVEEGRADREDNPLRHAPHTAAVVTANEWPHAYSREQAAYPVASLGTNKYWPPVGRADNAYGDRNLFCSCVPMSDYA.

An N6-(pyridoxal phosphate)lysine modification is found at K723.

It belongs to the GcvP family. The glycine cleavage system is composed of four proteins: P, T, L and H. Pyridoxal 5'-phosphate serves as cofactor.

It carries out the reaction N(6)-[(R)-lipoyl]-L-lysyl-[glycine-cleavage complex H protein] + glycine + H(+) = N(6)-[(R)-S(8)-aminomethyldihydrolipoyl]-L-lysyl-[glycine-cleavage complex H protein] + CO2. Functionally, the glycine cleavage system catalyzes the degradation of glycine. The P protein binds the alpha-amino group of glycine through its pyridoxal phosphate cofactor; CO(2) is released and the remaining methylamine moiety is then transferred to the lipoamide cofactor of the H protein. The sequence is that of Glycine dehydrogenase (decarboxylating) from Burkholderia orbicola (strain MC0-3).